Reading from the N-terminus, the 321-residue chain is tRNA U34 carboxymethyltransferase (321 aa).

Residues lysine 90, tryptophan 104, lysine 109, glycine 129, 151–153 (DPT), 180–181 (IE), methionine 195, tyrosine 199, and arginine 314 contribute to the carboxy-S-adenosyl-L-methionine site.

It belongs to the class I-like SAM-binding methyltransferase superfamily. CmoB family. In terms of assembly, homotetramer.

The enzyme catalyses carboxy-S-adenosyl-L-methionine + 5-hydroxyuridine(34) in tRNA = 5-carboxymethoxyuridine(34) in tRNA + S-adenosyl-L-homocysteine + H(+). Catalyzes carboxymethyl transfer from carboxy-S-adenosyl-L-methionine (Cx-SAM) to 5-hydroxyuridine (ho5U) to form 5-carboxymethoxyuridine (cmo5U) at position 34 in tRNAs. This Pasteurella multocida (strain Pm70) protein is tRNA U34 carboxymethyltransferase.